A 635-amino-acid polypeptide reads, in one-letter code: Threonine--tRNA ligase (635 aa).

The TGS domain occupies 1–61; it reads MINISFPDGS…EHDCKLRILT (61 aa). A catalytic region spans residues 242–533; it reads DHRKIGKELD…LIEEYAGKFP (292 aa). Zn(2+) contacts are provided by Cys-333, His-384, and His-510.

It belongs to the class-II aminoacyl-tRNA synthetase family. As to quaternary structure, homodimer. Zn(2+) serves as cofactor.

Its subcellular location is the cytoplasm. It catalyses the reaction tRNA(Thr) + L-threonine + ATP = L-threonyl-tRNA(Thr) + AMP + diphosphate + H(+). Functionally, catalyzes the attachment of threonine to tRNA(Thr) in a two-step reaction: L-threonine is first activated by ATP to form Thr-AMP and then transferred to the acceptor end of tRNA(Thr). Also edits incorrectly charged L-seryl-tRNA(Thr). The polypeptide is Threonine--tRNA ligase (Rickettsia typhi (strain ATCC VR-144 / Wilmington)).